The chain runs to 618 residues: Phostensin (618 aa).

Residues 15-33 (RRQEEAAVRGREKAERERL) are compositionally biased toward basic and acidic residues. The interval 15-505 (RRQEEAAVRG…PATADAAVPG (491 aa)) is disordered. S54 is modified (phosphoserine). A compositionally biased stretch (low complexity) spans 96-109 (QQQQQQQQQQQQQQ). 2 stretches are compositionally biased toward basic and acidic residues: residues 110-160 (RSEE…ERRL) and 173-197 (LESR…EVRK). S131, S139, S181, and S201 each carry phosphoserine. A Phosphothreonine modification is found at T205. A Phosphoserine modification is found at S231. Basic and acidic residues-rich tracts occupy residues 234–245 (DSDHEKLGLTDA) and 271–289 (SGEE…EERT). The span at 308 to 319 (EAAGSSSGGVEA) shows a compositional bias: low complexity. Positions 348 to 358 (KVRDRTPRDTE) are enriched in basic and acidic residues. Residues 429-451 (RPPPAAPLSPPPPAPPAPQPPGD) show a composition bias toward pro residues. Residue S437 is modified to Phosphoserine. At K462 the chain carries N6-acetyllysine. The segment covering 485–505 (APPAAAATPATPATADAAVPG) has biased composition (low complexity). S535 carries the post-translational modification Phosphoserine. The segment at 556-594 (YQYPSESSVLEELGPEPEAPSAPSPPAAQPDDEEDEEEL) is disordered. The span at 572 to 583 (PEAPSAPSPPAA) shows a compositional bias: pro residues. Residues 585–594 (PDDEEDEEEL) show a composition bias toward acidic residues.

In terms of assembly, interacts with Protein phosphatase 1 (PP1).

It is found in the cytoplasm. Its subcellular location is the cytoskeleton. In terms of biological role, may target protein phosphatase 1 to F-actin cytoskeleton. This chain is Phostensin (PPP1R18), found in Sus scrofa (Pig).